The primary structure comprises 291 residues: MRRYEDKHIPVMPKEVIEHLIWKKDGIYVDCTVGEGGHTLLLASISPDIFVIGLDIDSEVLNIAEKNLSSFTNVKLFKSSYVDLPVVLKALNIEKVSGILIDLGISTYQLKAEGRGFTFNRDEPLDMRMNLEQKKTAYDVVNFYSEKELADIIFKYGEERFSRRIARSIVNSRPINSTLELVEAIRKALPPQEIRKRKRHFATKTFQAIRIEVNGELSNIENFLNNVPDLLEIGGRLAVISFHSLEDRLVKHFIKNSNKLRQIVGPIIPSKEEIDENPRARSAKLRIAERI.

S-adenosyl-L-methionine-binding positions include 36–38, aspartate 55, alanine 90, aspartate 102, and glutamine 109; that span reads GGH.

This sequence belongs to the methyltransferase superfamily. RsmH family.

Its subcellular location is the cytoplasm. The enzyme catalyses cytidine(1402) in 16S rRNA + S-adenosyl-L-methionine = N(4)-methylcytidine(1402) in 16S rRNA + S-adenosyl-L-homocysteine + H(+). Its function is as follows. Specifically methylates the N4 position of cytidine in position 1402 (C1402) of 16S rRNA. The polypeptide is Ribosomal RNA small subunit methyltransferase H (Thermosipho africanus (strain TCF52B)).